Reading from the N-terminus, the 808-residue chain is Ribosome biogenesis protein BOP1 homolog (808 aa).

The interval Met-1–Thr-56 is disordered. 2 stretches are compositionally biased toward low complexity: residues Arg-12–Pro-24 and Ala-33–Asp-50. WD repeat units lie at residues Gly-430–Arg-469, Lys-640–Lys-680, Ser-682–Lys-720, Ser-724–Lys-766, and Lys-777–Glu-808.

Belongs to the WD repeat BOP1/ERB1 family.

It is found in the nucleus. The protein resides in the nucleolus. It localises to the nucleoplasm. Its function is as follows. Required for maturation of ribosomal RNAs and formation of the large ribosomal subunit. This Leishmania infantum protein is Ribosome biogenesis protein BOP1 homolog.